A 293-amino-acid polypeptide reads, in one-letter code: Elongation factor Ts (293 aa).

The involved in Mg(2+) ion dislocation from EF-Tu stretch occupies residues 80 to 83; the sequence is TDFV.

This sequence belongs to the EF-Ts family.

The protein localises to the cytoplasm. Functionally, associates with the EF-Tu.GDP complex and induces the exchange of GDP to GTP. It remains bound to the aminoacyl-tRNA.EF-Tu.GTP complex up to the GTP hydrolysis stage on the ribosome. The polypeptide is Elongation factor Ts (Aeromonas salmonicida (strain A449)).